The following is a 69-amino-acid chain: Dodecin (69 aa).

3-5 (KVY) contacts FMN. Residues Lys6, Arg28, and 32-34 (TLR) contribute to the CoA site. FMN contacts are provided by Asp37, Trp38, Arg45, Gln57, and Arg65. 65–67 (RLE) contributes to the CoA binding site.

This sequence belongs to the dodecin family. As to quaternary structure, homododecamer; four homotrimers assemble to form a dodecameric hollow sphere with an outer diameter of about 60 Angstroms. Flavin dimers are bound between subunits with a stoichiometry of 6 flavin dimers per dodecamer. Besides, trimeric coenzyme A molecules can be bound between subunits. A dodecamer can bind simultaneously 12 flavin and 12 coenzyme A molecules.

Its function is as follows. May function as storage protein that sequesters various flavins and other cofactors, thereby protecting the cell against undesirable reactions mediated by the free cofactors. Binds and sequesters FMN, FAD, lumiflavin and lumichrome, and can also bind coenzyme A. This chain is Dodecin, found in Thermus thermophilus (strain ATCC 27634 / DSM 579 / HB8).